We begin with the raw amino-acid sequence, 436 residues long: Gamma-glutamyl phosphate reductase (436 aa).

Belongs to the gamma-glutamyl phosphate reductase family.

The protein resides in the cytoplasm. It carries out the reaction L-glutamate 5-semialdehyde + phosphate + NADP(+) = L-glutamyl 5-phosphate + NADPH + H(+). Its pathway is amino-acid biosynthesis; L-proline biosynthesis; L-glutamate 5-semialdehyde from L-glutamate: step 2/2. Catalyzes the NADPH-dependent reduction of L-glutamate 5-phosphate into L-glutamate 5-semialdehyde and phosphate. The product spontaneously undergoes cyclization to form 1-pyrroline-5-carboxylate. The polypeptide is Gamma-glutamyl phosphate reductase (Salinibacter ruber (strain DSM 13855 / M31)).